Reading from the N-terminus, the 416-residue chain is Succinate--CoA ligase [ADP-forming] subunit beta (416 aa).

Residues 1–14 (MLRMAPKTVGAVRN) constitute a hydrogenosome transit peptide. ATP is bound by residues K64, 71-73 (GRG), and E132. Mg(2+) is bound by residues N224 and D242. Residues N293 and 350–352 (GIM) contribute to the substrate site.

The protein belongs to the succinate/malate CoA ligase beta subunit family. As to quaternary structure, heterodimer of an alpha and a beta subunit. The cofactor is Mg(2+).

Its subcellular location is the hydrogenosome. It carries out the reaction succinate + ATP + CoA = succinyl-CoA + ADP + phosphate. It participates in carbohydrate metabolism; tricarboxylic acid cycle; succinate from succinyl-CoA (ligase route): step 1/1. Succinyl-CoA synthetase functions in the citric acid cycle (TCA), coupling the hydrolysis of succinyl-CoA to the synthesis of ATP and thus represents the only step of substrate-level phosphorylation in the TCA. The beta subunit provides nucleotide specificity of the enzyme and binds the substrate succinate, while the binding sites for coenzyme A and phosphate are found in the alpha subunit. The chain is Succinate--CoA ligase [ADP-forming] subunit beta (SCSb) from Blastocystis sp. subtype 1 (strain ATCC 50177 / NandII).